A 454-amino-acid chain; its full sequence is tRNA modification GTPase MnmE (454 aa).

Residues arginine 23, glutamate 80, and lysine 120 each coordinate (6S)-5-formyl-5,6,7,8-tetrahydrofolate. One can recognise a TrmE-type G domain in the interval 216 to 377 (GMKVVIAGRP…LRNNLKQSMG (162 aa)). Asparagine 226 contacts K(+). GTP-binding positions include 226-231 (NAGKSS), 245-251 (TDIAGTT), 270-273 (DTAG), 335-338 (NKAD), and 358-360 (SAR). Residue serine 230 coordinates Mg(2+). Residues threonine 245, isoleucine 247, and threonine 250 each contribute to the K(+) site. Threonine 251 contacts Mg(2+). (6S)-5-formyl-5,6,7,8-tetrahydrofolate is bound at residue lysine 454.

Belongs to the TRAFAC class TrmE-Era-EngA-EngB-Septin-like GTPase superfamily. TrmE GTPase family. In terms of assembly, homodimer. Heterotetramer of two MnmE and two MnmG subunits. K(+) is required as a cofactor.

It localises to the cytoplasm. Its function is as follows. Exhibits a very high intrinsic GTPase hydrolysis rate. Involved in the addition of a carboxymethylaminomethyl (cmnm) group at the wobble position (U34) of certain tRNAs, forming tRNA-cmnm(5)s(2)U34. The protein is tRNA modification GTPase MnmE of Salmonella paratyphi A (strain ATCC 9150 / SARB42).